The primary structure comprises 1337 residues: ABC transporter D family member 1 (1337 aa).

4 consecutive transmembrane segments (helical) span residues 24-44 (ILLAAGIVAAGGTAVYLKSRV), 142-162 (APLFLRLISENIMLCFMLSTL), 247-267 (YASPKYIFWILAYVLGAGTAI), and 342-362 (FLLKYLGATVAVILIIEPFFS). One can recognise an ABC transmembrane type-1 1 domain in the interval 117-395 (VFRTALSNRL…SVIISLFQAL (279 aa)). The ABC transporter 1 domain occupies 448–695 (VEFSDVKVVT…DAMVVQRAFA (248 aa)). 481–488 (GPNGSGKS) contacts ATP. An ABC transmembrane type-1 2 domain is found at 751–1049 (LIPTIFDKQG…VVSQSFMAFG (299 aa)). Residues 900-920 (LLTGQRGVAILYTYMLLGLGF) traverse the membrane as a helical segment. In terms of domain architecture, ABC transporter 2 spans 1091-1337 (LDSQDLLSFS…ELRSIEQTTE (247 aa)). 1130 to 1137 (GPNGSGKT) is an ATP binding site.

It belongs to the ABC transporter superfamily. ABCD family. Peroxisomal fatty acyl CoA transporter (TC 3.A.1.203) subfamily.

It localises to the peroxisome membrane. It is found in the glyoxysome membrane. It catalyses the reaction an acyl-CoA(out) + ATP + H2O = an acyl-CoA(in) + ADP + phosphate + H(+). Contributes to the transport of fatty acids and their derivatives (acyl CoAs) across the peroxisomal membrane. Provides acetate to the glyoxylate cycle in developing seedlings. Involved in pollen tube elongation, ovule fertilization, and seeds germination after imbibition (controls the switch between the opposing developmental programs of dormancy and germination), probably by promoting beta-oxidation of storage lipids during gluconeogenesis. Required for biosynthesis of jasmonic acid and conversion of indole butyric acid to indole acetic acid. Confers sensitivity to monofluoroacetic acid (FAc), a toxic acetate analog, and to 2,4-dichlorophenoxybutyric acid (2,4-DB) and indole-3-butyric acid (IBA), two precursors of auxin after beta-oxidation. This Arabidopsis thaliana (Mouse-ear cress) protein is ABC transporter D family member 1.